Consider the following 491-residue polypeptide: Phosphoethanolamine N-methyltransferase 1 (491 aa).

A2 bears the N-acetylalanine mark. S-adenosyl-L-homocysteine-binding residues include G61, R66, D82, D107, V108, and N126. Positions 159, 164, 165, 169, and 176 each coordinate phosphocholine. Residues 245 to 246 and Y254 contribute to the N-methylethanolamine phosphate site; that span reads QY. Y254 serves as a coordination point for phosphocholine. Residues V263, S264, G290, D312, D338, C339, and R355 each contribute to the S-adenosyl-L-homocysteine site. Phosphocholine is bound by residues Y386, Y400, R404, Y406, and K472. N-methylethanolamine phosphate contacts are provided by residues Y386, Y400, 404-406, and K472; that span reads RGY.

Belongs to the class I-like SAM-binding methyltransferase superfamily. PEAMT family. In terms of tissue distribution, highly expressed in the meristem and elongation zones of the root. Expressed in differentiated root epidermal cells. Highly expressed in leaf vasculature.

Its subcellular location is the cytoplasm. The enzyme catalyses phosphoethanolamine + S-adenosyl-L-methionine = N-methylethanolamine phosphate + S-adenosyl-L-homocysteine + H(+). It carries out the reaction N-methylethanolamine phosphate + S-adenosyl-L-methionine = N,N-dimethylethanolamine phosphate + S-adenosyl-L-homocysteine + H(+). The catalysed reaction is N,N-dimethylethanolamine phosphate + S-adenosyl-L-methionine = phosphocholine + S-adenosyl-L-homocysteine + H(+). The protein operates within phospholipid metabolism; phosphatidylcholine biosynthesis; phosphocholine from phosphoethanolamine: step 1/1. Its function is as follows. Involved in phosphocholine biosynthesis. Catalyzes the N-methylation of phosphoethanolamine, phosphomonomethylethanolamine and phosphodimethylethanolamine, the three methylation steps required to convert phosphoethanolamine to phosphocholine (PC). Required for root system development and epidermal cell integrity through its role in choline and phospholipid metabolism. In association with NMT3, regulates PC homeostasis, phase transition at the shoot apex, coordinated organ development, and fertility. In association with NMT3, involved in phosphatidylcholine biosynthesis and vascular development. In association with NMT2, involved in the production of phosphatidylcholine in roots, essential for root development. In association with NMT2 produce phosphocholine mainly for leaf growth maintenance. Contributes to the regulation of overall root zonation dynamics through reactive oxygen species (ROS) and auxin-regulated cell differentiation. Participates in root development of primary root elongation under salt stress conditions by balancing reactive oxygen species (ROS) production and distribution through abscisic acid (ABA) signaling. The sequence is that of Phosphoethanolamine N-methyltransferase 1 from Arabidopsis thaliana (Mouse-ear cress).